The chain runs to 360 residues: Probable neutral protease 2 homolog A (360 aa).

A signal peptide spans 1-17 (MQFTALLAALGAPLALA). A propeptide spanning residues 18 to 183 (ASIPAAAHNH…DDSTGVIDKR (166 aa)) is cleaved from the precursor. 3 cysteine pairs are disulfide-bonded: C191–C262, C269–C287, and C300–C360. Residue N205 is glycosylated (N-linked (GlcNAc...) asparagine). H311 is a Zn(2+) binding site. The active site involves E312. 2 residues coordinate Zn(2+): H315 and D326.

The protein belongs to the peptidase M35 family. The cofactor is Zn(2+).

Its subcellular location is the secreted. The enzyme catalyses Preferential cleavage of bonds with hydrophobic residues in P1'. Also 3-Asn-|-Gln-4 and 8-Gly-|-Ser-9 bonds in insulin B chain.. In terms of biological role, probable secreted metalloprotease that shows high activities on basic nuclear substrates such as histone and protamine. May be involved in virulence. The sequence is that of Probable neutral protease 2 homolog A (NpII-A) from Trichophyton rubrum (Athlete's foot fungus).